Here is a 2300-residue protein sequence, read N- to C-terminus: Protein hobbit (2300 aa).

The signal sequence occupies residues 1-21 (MMLQLLLFCLALFIFVYWVLP). Residues 23–117 (GISWYLVKRF…LRRTQTLAGK (95 aa)) form a transmembrane domain region. Disordered stretches follow at residues 269-290 (TSTG…RSYD) and 2111-2148 (VSDE…GKKG). Positions 270 to 282 (STGQPSRRSTQGL) are enriched in polar residues. The required for endoplasmic reticulum-cell membrane contact sites location and binding to phosphatidylinositols stretch occupies residues 1750–2300 (VVSETVGAFL…ASSGKRSGND (551 aa)). Positions 2119–2140 (ASTSSASTTNLQAKSSTSSSTK) are enriched in low complexity.

The protein localises to the cell membrane. It localises to the endoplasmic reticulum membrane. Its subcellular location is the mitochondrion membrane. In terms of biological role, tube-forming lipid transport protein which binds to phosphatidylinositols and affects phosphatidylinositol-4,5-bisphosphate (PtdIns-4,5-P2) distribution. This is Protein hobbit from Drosophila melanogaster (Fruit fly).